We begin with the raw amino-acid sequence, 244 residues long: Capsid protein (244 aa).

The short motif at 1 to 24 (MSTSKRKRGDDANWSKRVTKKKPS) is the Bipartite nuclear localization signal element. A disordered region spans residues 1–39 (MSTSKRKRGDDANWSKRVTKKKPSSAGLKRAGSKADRPS).

This sequence belongs to the geminiviridae capsid protein family. Homomultimer. Interacts with the movement protein. Binds to single-stranded and double-stranded viral DNA.

It is found in the virion. The protein resides in the host nucleus. Its function is as follows. Encapsidates the viral genome into characteristic twinned ('geminate') particles. Binds the genomic viral ssDNA and shuttles it into and out of the cell nucleus. Plays a role in protection of the genome from degradation, virus acquisition and transmission by insect vectors, infectivity, and systemic movement. The CP of monopartite geminiviruses is absolutely essential for virus movement. This Maize streak virus genotype A (isolate Kenya) (MSV) protein is Capsid protein.